The primary structure comprises 238 residues: Acyl-protein thioesterase 1 (238 aa).

Active-site charge relay system residues include Ser120, Asp174, and His219.

Belongs to the AB hydrolase superfamily. AB hydrolase 2 family.

It localises to the cytoplasm. The protein localises to the nucleus. It carries out the reaction S-hexadecanoyl-L-cysteinyl-[protein] + H2O = L-cysteinyl-[protein] + hexadecanoate + H(+). Hydrolyzes fatty acids from S-acylated cysteine residues in proteins with a strong preference for palmitoylated G-alpha proteins over other acyl substrates. Mediates the deacylation of G-alpha proteins such as GPA1 in vivo, but has weak or no activity toward palmitoylated Ras proteins. Has weak lysophospholipase activity in vitro; however such activity may not exist in vivo. The chain is Acyl-protein thioesterase 1 from Cryptococcus neoformans var. neoformans serotype D (strain B-3501A) (Filobasidiella neoformans).